A 369-amino-acid chain; its full sequence is tRNA pseudouridine synthase D (369 aa).

Residue Asp80 is the Nucleophile of the active site. Residues Gly156–Leu318 form the TRUD domain.

It belongs to the pseudouridine synthase TruD family.

It catalyses the reaction uridine(13) in tRNA = pseudouridine(13) in tRNA. In terms of biological role, responsible for synthesis of pseudouridine from uracil-13 in transfer RNAs. The chain is tRNA pseudouridine synthase D from Xanthomonas oryzae pv. oryzae (strain KACC10331 / KXO85).